The primary structure comprises 96 residues: Co-chaperonin GroES (96 aa).

The protein belongs to the GroES chaperonin family. Heptamer of 7 subunits arranged in a ring. Interacts with the chaperonin GroEL.

Its subcellular location is the cytoplasm. Its function is as follows. Together with the chaperonin GroEL, plays an essential role in assisting protein folding. The GroEL-GroES system forms a nano-cage that allows encapsulation of the non-native substrate proteins and provides a physical environment optimized to promote and accelerate protein folding. GroES binds to the apical surface of the GroEL ring, thereby capping the opening of the GroEL channel. The protein is Co-chaperonin GroES of Thioalkalivibrio sulfidiphilus (strain HL-EbGR7).